Consider the following 86-residue polypeptide: Large ribosomal subunit protein uL23c (86 aa).

This sequence belongs to the universal ribosomal protein uL23 family. In terms of assembly, part of the 50S ribosomal subunit.

The protein localises to the plastid. It localises to the chloroplast. In terms of biological role, binds to 23S rRNA. In Chlorella vulgaris (Green alga), this protein is Large ribosomal subunit protein uL23c (rpl23).